Reading from the N-terminus, the 488-residue chain is Serine protease HTR4 (488 aa).

Positions 1-35 are cleaved as a signal peptide; it reads MSRSKMSSQRLWAVRAQFLLLWLLLWAAPVPWAEA. The region spanning 40 to 118 is the IGFBP N-terminal domain; the sequence is VSLPCPDACD…RAWLGTCGCA (79 aa). 6 cysteine pairs are disulfide-bonded: Cys-44-Cys-70, Cys-48-Cys-72, Cys-53-Cys-73, Cys-59-Cys-76, Cys-84-Cys-98, and Cys-92-Cys-115. A serine protease region spans residues 213-373; it reads GSGFIVSEDG…IPSDRIRQFL (161 aa). Active-site charge relay system residues include His-229, Asp-259, and Ser-337. In terms of domain architecture, PDZ spans 384–476; it reads KAPLQKKYLG…LSIIVLRGSQ (93 aa).

Belongs to the peptidase S1C family.

It localises to the secreted. Serine protease. The protein is Serine protease HTR4 (Htra4) of Rattus norvegicus (Rat).